The primary structure comprises 285 residues: Bifunctional protein FolD (285 aa).

Residues 165-167 (GRS), serine 190, and isoleucine 231 each bind NADP(+).

This sequence belongs to the tetrahydrofolate dehydrogenase/cyclohydrolase family. Homodimer.

It catalyses the reaction (6R)-5,10-methylene-5,6,7,8-tetrahydrofolate + NADP(+) = (6R)-5,10-methenyltetrahydrofolate + NADPH. It carries out the reaction (6R)-5,10-methenyltetrahydrofolate + H2O = (6R)-10-formyltetrahydrofolate + H(+). It participates in one-carbon metabolism; tetrahydrofolate interconversion. Functionally, catalyzes the oxidation of 5,10-methylenetetrahydrofolate to 5,10-methenyltetrahydrofolate and then the hydrolysis of 5,10-methenyltetrahydrofolate to 10-formyltetrahydrofolate. This chain is Bifunctional protein FolD, found in Magnetococcus marinus (strain ATCC BAA-1437 / JCM 17883 / MC-1).